We begin with the raw amino-acid sequence, 661 residues long: UvrABC system protein B (661 aa).

One can recognise a Helicase ATP-binding domain in the interval 28–414; it reads KGVKEGKRHQ…HTDEMIEQII (387 aa). An ATP-binding site is contributed by 41–48; that stretch reads GATGTGKT. The Beta-hairpin signature appears at 94-117; it reads YYDYYQPEAYVPSTDTFIEKDASI. In terms of domain architecture, Helicase C-terminal spans 432-598; it reads QIDDLLSEIQ…TINKKIHDVI (167 aa). The disordered stretch occupies residues 604–625; sequence NDETNEKQQTELPKKMTKKERQ. Positions 607–617 are enriched in basic and acidic residues; the sequence is TNEKQQTELPK. The 36-residue stretch at 625–660 folds into the UVR domain; it reads QKTIENIEKEMKKAAKDLDFEKATELRDMLFELKSE.

The protein belongs to the UvrB family. In terms of assembly, forms a heterotetramer with UvrA during the search for lesions. Interacts with UvrC in an incision complex.

Its subcellular location is the cytoplasm. Its function is as follows. The UvrABC repair system catalyzes the recognition and processing of DNA lesions. A damage recognition complex composed of 2 UvrA and 2 UvrB subunits scans DNA for abnormalities. Upon binding of the UvrA(2)B(2) complex to a putative damaged site, the DNA wraps around one UvrB monomer. DNA wrap is dependent on ATP binding by UvrB and probably causes local melting of the DNA helix, facilitating insertion of UvrB beta-hairpin between the DNA strands. Then UvrB probes one DNA strand for the presence of a lesion. If a lesion is found the UvrA subunits dissociate and the UvrB-DNA preincision complex is formed. This complex is subsequently bound by UvrC and the second UvrB is released. If no lesion is found, the DNA wraps around the other UvrB subunit that will check the other stand for damage. The protein is UvrABC system protein B of Staphylococcus haemolyticus (strain JCSC1435).